The sequence spans 537 residues: Ataxin-10 homolog (537 aa).

It belongs to the ataxin-10 family.

It localises to the cytoplasm. In terms of biological role, may play a role in the regulation of cytokinesis. In Kluyveromyces lactis (strain ATCC 8585 / CBS 2359 / DSM 70799 / NBRC 1267 / NRRL Y-1140 / WM37) (Yeast), this protein is Ataxin-10 homolog (CTR86).